The primary structure comprises 236 residues: Eukaryotic translation initiation factor 3 subunit J (236 aa).

The tract at residues 1 to 88 (MADDWESAAD…EAEAQRVASL (88 aa)) is disordered. Positions 28–46 (GEDEDEDIKDSWEDEEEKK) are enriched in acidic residues. Composition is skewed to basic and acidic residues over residues 47–58 (DEEKPTKTEAPA) and 68–77 (AKLEQQARLE).

This sequence belongs to the eIF-3 subunit J family. As to quaternary structure, component of the eukaryotic translation initiation factor 3 (eIF-3) complex. The eIF-3 complex interacts with pix.

It is found in the cytoplasm. In terms of biological role, component of the eukaryotic translation initiation factor 3 (eIF-3) complex, which is involved in protein synthesis of a specialized repertoire of mRNAs and, together with other initiation factors, stimulates binding of mRNA and methionyl-tRNAi to the 40S ribosome. The eIF-3 complex specifically targets and initiates translation of a subset of mRNAs involved in cell proliferation. This chain is Eukaryotic translation initiation factor 3 subunit J, found in Drosophila erecta (Fruit fly).